A 626-amino-acid chain; its full sequence is E3 ubiquitin-protein ligase HRD1 (626 aa).

An N-terminal signal peptide occupies residues 1-15 (MQLLLSSVCMALTSA). Over 16 to 38 (VIGFAYYQKQQFYPAVVYITKSN) the chain is Lumenal. A helical membrane pass occupies residues 39 to 59 (ASMGVIYIQFFVIVFMFGKLL). Residues 60–96 (SKIFLGTLRAAEFEHLLERFWYALTETCLAFTVFRDD) lie on the Cytoplasmic side of the membrane. Residues 97 to 117 (FNPRFVALFTVLLFLKSFHWL) form a helical membrane-spanning segment. Topologically, residues 118 to 128 (AEERVDFMERS) are lumenal. A helical membrane pass occupies residues 129–149 (PVLGWLFHIRVGSLLTVLGIL). The Cytoplasmic segment spans residues 150–167 (DYVLLIHAYNSTLVRGPT). A helical transmembrane segment spans residues 168-188 (VQLVFGFEYAILLTVIASTAI). Topologically, residues 189 to 222 (KYVLHAAEMRTDTPWENKAVFLLYTELVIGLIKV) are lumenal. The helical transmembrane segment at 223-243 (VLYILFVVIMAKIYALPMFVF) threads the bilayer. The tract at residues 234–268 (KIYALPMFVFRPMFFTIRNFRKALNDVIMSRRAIR) is interaction with p53/TP53. At 244–626 (RPMFFTIRNF…AATNERTTAE (383 aa)) the chain is on the cytoplasmic side. Residues 289–328 (CIICREDMVNHSKKLPCGHIFHTTCLRSWFQRQQTCPTCR) form an RING-type; atypical zinc finger. The interval 569–600 (DADEDDIPSTATEAVSIPNSDADFEENSSELG) is disordered. Positions 577–587 (STATEAVSIPN) are enriched in polar residues.

This sequence belongs to the HRD1 family. As to quaternary structure, homodimer. Interacts with p53. May interact with Septin2.

The protein localises to the endoplasmic reticulum membrane. It carries out the reaction S-ubiquitinyl-[E2 ubiquitin-conjugating enzyme]-L-cysteine + [acceptor protein]-L-lysine = [E2 ubiquitin-conjugating enzyme]-L-cysteine + N(6)-ubiquitinyl-[acceptor protein]-L-lysine.. Its pathway is protein modification; protein ubiquitination. In terms of biological role, acts as an E3 ubiquitin-protein ligase which accepts ubiquitin specifically from endoplasmic reticulum-associated UBC7 E2 ligase and transfers it to substrates, promoting their degradation. Component of the endoplasmic reticulum quality control (ERQC) system also called ER-associated degradation (ERAD) involved in ubiquitin-dependent degradation of misfolded endoplasmic reticulum proteins. Also promotes the degradation of normal but naturally short-lived proteins. Protects cells from ER stress-induced apoptosis. Sequesters p53 in the cytoplasm and promotes its degradation, thereby negatively regulating its biological function in transcription, cell cycle regulation and apoptosis. This chain is E3 ubiquitin-protein ligase HRD1 (sip3), found in Drosophila melanogaster (Fruit fly).